The sequence spans 292 residues: Nucleotide-binding protein Ldb0621 (292 aa).

Position 14–21 (14–21 (GMSGAGKT)) interacts with ATP. 64-67 (DLRV) contributes to the GTP binding site.

Belongs to the RapZ-like family.

Displays ATPase and GTPase activities. The polypeptide is Nucleotide-binding protein Ldb0621 (Lactobacillus delbrueckii subsp. bulgaricus (strain ATCC 11842 / DSM 20081 / BCRC 10696 / JCM 1002 / NBRC 13953 / NCIMB 11778 / NCTC 12712 / WDCM 00102 / Lb 14)).